Consider the following 508-residue polypeptide: Photosystem II CP47 reaction center protein (508 aa).

6 helical membrane-spanning segments follow: residues 21-36 (AVHI…WAGS), 101-115 (IVFS…IWHW), 140-156 (GIHL…FGAF), 203-218 (IAAG…FHLS), 237-252 (VLSS…AFVV), and 457-472 (SFAL…HGAR).

The protein belongs to the PsbB/PsbC family. PsbB subfamily. In terms of assembly, PSII is composed of 1 copy each of membrane proteins PsbA, PsbB, PsbC, PsbD, PsbE, PsbF, PsbH, PsbI, PsbJ, PsbK, PsbL, PsbM, PsbT, PsbX, PsbY, PsbZ, Psb30/Ycf12, at least 3 peripheral proteins of the oxygen-evolving complex and a large number of cofactors. It forms dimeric complexes. Requires Binds multiple chlorophylls. PSII binds additional chlorophylls, carotenoids and specific lipids. as cofactor.

The protein localises to the plastid. Its subcellular location is the chloroplast thylakoid membrane. Its function is as follows. One of the components of the core complex of photosystem II (PSII). It binds chlorophyll and helps catalyze the primary light-induced photochemical processes of PSII. PSII is a light-driven water:plastoquinone oxidoreductase, using light energy to abstract electrons from H(2)O, generating O(2) and a proton gradient subsequently used for ATP formation. In Nandina domestica (Heavenly bamboo), this protein is Photosystem II CP47 reaction center protein.